The chain runs to 76 residues: MVRQFKRRRYCRFTAEDVKEIDYKDLDTLREYVSETGKIVPSRITGTSAKYQRQLATAIKRARFLALLPFCDAHEQ.

It belongs to the bacterial ribosomal protein bS18 family. Part of the 30S ribosomal subunit. Forms a tight heterodimer with protein bS6.

Its function is as follows. Binds as a heterodimer with protein bS6 to the central domain of the 16S rRNA, where it helps stabilize the platform of the 30S subunit. This Methylococcus capsulatus (strain ATCC 33009 / NCIMB 11132 / Bath) protein is Small ribosomal subunit protein bS18.